The primary structure comprises 178 residues: Ribosomal RNA small subunit methyltransferase G (178 aa).

S-adenosyl-L-methionine-binding positions include Gly54, Leu59, 105–106 (LE), and Arg120.

The protein belongs to the methyltransferase superfamily. RNA methyltransferase RsmG family.

The protein resides in the cytoplasm. It carries out the reaction guanosine(527) in 16S rRNA + S-adenosyl-L-methionine = N(7)-methylguanosine(527) in 16S rRNA + S-adenosyl-L-homocysteine. Its function is as follows. Specifically methylates the N7 position of guanine in position 527 of 16S rRNA. The protein is Ribosomal RNA small subunit methyltransferase G of Helicobacter acinonychis (strain Sheeba).